Reading from the N-terminus, the 361-residue chain is 5-formaminoimidazole-4-carboxamide-1-(beta)-D-ribofuranosyl 5'-monophosphate synthetase (361 aa).

5-amino-1-(5-phospho-beta-D-ribosyl)imidazole-4-carboxamide-binding residues include H27 and S94. Residues R116–K348 enclose the ATP-grasp domain. Residues P146 to C208 and E230 each bind ATP. Residue N258 coordinates 5-amino-1-(5-phospho-beta-D-ribosyl)imidazole-4-carboxamide. Q297 and E310 together coordinate Mg(2+).

Belongs to the phosphohexose mutase family. Requires Mg(2+) as cofactor. Mn(2+) is required as a cofactor.

It catalyses the reaction 5-amino-1-(5-phospho-beta-D-ribosyl)imidazole-4-carboxamide + formate + ATP = 5-formamido-1-(5-phospho-D-ribosyl)imidazole-4-carboxamide + ADP + phosphate. The protein operates within purine metabolism; IMP biosynthesis via de novo pathway; 5-formamido-1-(5-phospho-D-ribosyl)imidazole-4-carboxamide from 5-amino-1-(5-phospho-D-ribosyl)imidazole-4-carboxamide (formate route): step 1/1. Catalyzes the ATP- and formate-dependent formylation of 5-aminoimidazole-4-carboxamide-1-beta-d-ribofuranosyl 5'-monophosphate (AICAR) to 5-formaminoimidazole-4-carboxamide-1-beta-d-ribofuranosyl 5'-monophosphate (FAICAR) in the absence of folates. This is 5-formaminoimidazole-4-carboxamide-1-(beta)-D-ribofuranosyl 5'-monophosphate synthetase from Methanococcus maripaludis (strain C6 / ATCC BAA-1332).